A 353-amino-acid polypeptide reads, in one-letter code: DNA-directed RNA polymerase subunit alpha (353 aa).

Residues 1-234 are alpha N-terminal domain (alpha-NTD); the sequence is MVREKVTVST…DLFIPFLHTE (234 aa). The alpha C-terminal domain (alpha-CTD) stretch occupies residues 267–353; sequence KRALKSIFID…LAQLIDSKSG (87 aa).

It belongs to the RNA polymerase alpha chain family. In terms of assembly, in plastids the minimal PEP RNA polymerase catalytic core is composed of four subunits: alpha, beta, beta', and beta''. When a (nuclear-encoded) sigma factor is associated with the core the holoenzyme is formed, which can initiate transcription.

It localises to the plastid. Its subcellular location is the chloroplast. It catalyses the reaction RNA(n) + a ribonucleoside 5'-triphosphate = RNA(n+1) + diphosphate. DNA-dependent RNA polymerase catalyzes the transcription of DNA into RNA using the four ribonucleoside triphosphates as substrates. The polypeptide is DNA-directed RNA polymerase subunit alpha (Daucus carota (Wild carrot)).